The primary structure comprises 244 residues: Ureidoacrylate amidohydrolase RutB (244 aa).

Asp-38 serves as the catalytic Proton acceptor. Lys-147 is a catalytic residue. The Nucleophile role is filled by Cys-180.

This sequence belongs to the isochorismatase family. RutB subfamily.

It carries out the reaction (Z)-3-ureidoacrylate + H2O + H(+) = (Z)-3-aminoacrylate + NH4(+) + CO2. The catalysed reaction is (Z)-3-ureidoacrylate + H2O = (Z)-3-aminoacrylate + carbamate + H(+). The enzyme catalyses (Z)-2-methylureidoacrylate + H2O + H(+) = (Z)-2-methylaminoacrylate + NH4(+) + CO2. In terms of biological role, hydrolyzes ureidoacrylate to form aminoacrylate and carbamate. The carbamate hydrolyzes spontaneously, thereby releasing one of the nitrogen atoms of the pyrimidine ring as ammonia and one of its carbon atoms as CO2. The sequence is that of Ureidoacrylate amidohydrolase RutB from Shigella sonnei (strain Ss046).